We begin with the raw amino-acid sequence, 222 residues long: 7-cyano-7-deazaguanine synthase (222 aa).

8-18 (LSGGMDSTTAA) contributes to the ATP binding site. The Zn(2+) site is built by Cys187, Cys195, Cys198, and Cys201.

It belongs to the QueC family. The cofactor is Zn(2+).

It carries out the reaction 7-carboxy-7-deazaguanine + NH4(+) + ATP = 7-cyano-7-deazaguanine + ADP + phosphate + H2O + H(+). The protein operates within purine metabolism; 7-cyano-7-deazaguanine biosynthesis. In terms of biological role, catalyzes the ATP-dependent conversion of 7-carboxy-7-deazaguanine (CDG) to 7-cyano-7-deazaguanine (preQ(0)). This chain is 7-cyano-7-deazaguanine synthase, found in Nautilia profundicola (strain ATCC BAA-1463 / DSM 18972 / AmH).